We begin with the raw amino-acid sequence, 500 residues long: DNA polymerase processivity factor (500 aa).

The segment at 388–500 (VSESDDAAAE…QEPANKRGKR (113 aa)) is disordered. The span at 438-449 (TLQQSAQPSSPA) shows a compositional bias: polar residues.

Belongs to the herpesviridae DNA polymerase processivity factor family. Interacts with the DNA polymerase catalytic subunit UL30. Interacts with the origin-binding protein.

It localises to the host nucleus. Its function is as follows. Plays an essential role in viral DNA replication by acting as the polymerase accessory subunit. Associates with the viral polymerase to increase its processivity and forms high-affinity direct interactions with DNA. Facilitates the origin-binding protein UL9 loading onto DNA thus increasing its ability to assemble into a functional complex capable of unwinding duplex DNA. The protein is DNA polymerase processivity factor (UL42) of Amazona oratrix (yellow-headed parrot).